We begin with the raw amino-acid sequence, 372 residues long: Solute carrier family 35 member F6 (372 aa).

Positions 1–18 are cleaved as a signal peptide; sequence MAWTKYQLFLAGLMLVTG. 2 consecutive transmembrane segments (helical) span residues 48-68 and 89-109; these read FVQA…FYLL and LLFL…YVAL. An EamA domain is found at 105 to 160; sequence MYVALNMTSASSFQMLRGAVIIFTGLFSVAFLDRRLAPSQWLGILITIAGLVVVGL. Asn-110 is a glycosylation site (N-linked (GlcNAc...) asparagine). 7 consecutive transmembrane segments (helical) span residues 116 to 136, 145 to 165, 176 to 196, 211 to 231, 261 to 281, 293 to 312, and 320 to 336; these read SFQM…VAFL, WLGI…DLLS, VITG…QMVL, AVGI…VPMF, LIAL…FSGI, MVLD…ALGW, and ILGF…YNGL. Residue Thr-366 is modified to Phosphothreonine.

This sequence belongs to the SLC35F solute transporter family. As to quaternary structure, interacts with SLC25A5.

The protein resides in the mitochondrion. The protein localises to the lysosome membrane. Involved in the maintenance of mitochondrial membrane potential in pancreatic ductal adenocarcinoma (PDAC) cells. Promotes pancreatic ductal adenocarcinoma (PDAC) cell growth. May play a role as a nucleotide-sugar transporter. This Mus musculus (Mouse) protein is Solute carrier family 35 member F6 (Slc35f6).